The primary structure comprises 230 residues: Dephospho-CoA kinase (230 aa).

In terms of domain architecture, DPCK spans 3–206; the sequence is LVGLTGGIAS…EPLTWKERLR (204 aa). 8-15 contributes to the ATP binding site; that stretch reads GGIASGKS.

The protein belongs to the CoaE family.

The enzyme catalyses 3'-dephospho-CoA + ATP = ADP + CoA + H(+). The protein operates within cofactor biosynthesis; coenzyme A biosynthesis; CoA from (R)-pantothenate: step 5/5. In terms of biological role, catalyzes the phosphorylation of the 3'-hydroxyl group of dephosphocoenzyme A to form coenzyme A. The sequence is that of Dephospho-CoA kinase from Oryza sativa subsp. japonica (Rice).